A 92-amino-acid polypeptide reads, in one-letter code: UPF0473 protein OB2006 (92 aa).

Belongs to the UPF0473 family.

This Oceanobacillus iheyensis (strain DSM 14371 / CIP 107618 / JCM 11309 / KCTC 3954 / HTE831) protein is UPF0473 protein OB2006.